A 444-amino-acid chain; its full sequence is ATP-dependent RNA helicase SrmB (444 aa).

Residues 4-32 (TTFSELELDESLLEALQDKGFTRPTAIQA) carry the Q motif motif. A Helicase ATP-binding domain is found at 35 to 209 (IPPALDGRDV…AERLLEDPVE (175 aa)). 48 to 55 (APTGTGKT) provides a ligand contact to ATP. Positions 157–160 (DEAD) match the DEAD box motif. Residues 238 to 387 (LLVHLLKQPE…ELRPKTRAPS (150 aa)) enclose the Helicase C-terminal domain. The span at 382 to 391 (KTRAPSEKQT) shows a compositional bias: basic and acidic residues. The interval 382–444 (KTRAPSEKQT…TGVPPQTTEE (63 aa)) is disordered. Composition is skewed to basic residues over residues 394–406 (PSKK…AEKK) and 414–432 (PRVK…RRKP).

It belongs to the DEAD box helicase family. SrmB subfamily. In terms of assembly, interacts with the 50S ribosomal subunit. Forms a complex with the 50S ribosomal proteins L4 and L24, and a region near the 5'-end of 23S rRNA.

The protein localises to the cytoplasm. It carries out the reaction ATP + H2O = ADP + phosphate + H(+). Its function is as follows. DEAD-box RNA helicase involved in the assembly of the 50S ribosomal subunit at low temperature. Exhibits RNA-stimulated ATP hydrolysis and RNA unwinding activity. Acts before DeaD. The protein is ATP-dependent RNA helicase SrmB of Escherichia coli (strain K12).